Reading from the N-terminus, the 302-residue chain is Sulfate adenylyltransferase subunit 2 (302 aa).

The tract at residues 280 to 302 (RQGRVIDHDSSGSMEKKKREGYF) is disordered.

The protein belongs to the PAPS reductase family. CysD subfamily. In terms of assembly, heterodimer composed of CysD, the smaller subunit, and CysN.

The catalysed reaction is sulfate + ATP + H(+) = adenosine 5'-phosphosulfate + diphosphate. The protein operates within sulfur metabolism; hydrogen sulfide biosynthesis; sulfite from sulfate: step 1/3. In terms of biological role, with CysN forms the ATP sulfurylase (ATPS) that catalyzes the adenylation of sulfate producing adenosine 5'-phosphosulfate (APS) and diphosphate, the first enzymatic step in sulfur assimilation pathway. APS synthesis involves the formation of a high-energy phosphoric-sulfuric acid anhydride bond driven by GTP hydrolysis by CysN coupled to ATP hydrolysis by CysD. This Shewanella amazonensis (strain ATCC BAA-1098 / SB2B) protein is Sulfate adenylyltransferase subunit 2.